We begin with the raw amino-acid sequence, 179 residues long: MMKDIIPASSWASEESTDLQNGSFPLSVAPRSEFPRRRALEDWLLSVFLADQAESEGQLVLERVRDTPPPVTSPRGDGICVSRGKAPSSPGGSTHAWLYLTRHFPWSPFPHGGWTDTSEPCVLETLGGSSLAALRGNSLWVQSSGACAFCVYESLIEQSLPNERFEELLLGPSPGEVMK.

Disordered regions lie at residues 1–20 (MMKD…TDLQ) and 65–86 (RDTP…RGKA). Over residues 10 to 20 (SWASEESTDLQ) the composition is skewed to polar residues.

The chain is B-cell acute lymphoblastic leukemia-expressed protein (BLACE) from Homo sapiens (Human).